The chain runs to 319 residues: Transcription factor bHLH111 (319 aa).

Residues 1 to 23 (MDHHHHIASRNSSTTSELPSFEP) are disordered. The segment covering 9–18 (SRNSSTTSEL) has biased composition (polar residues). The region spanning 195–244 (SEGSTLSPEKELPKAKLRDKITTLQQIVSPFGKTDTASVLQEAITYINFY) is the bHLH domain.

As to quaternary structure, homodimer.

Its subcellular location is the nucleus. The polypeptide is Transcription factor bHLH111 (BHLH111) (Arabidopsis thaliana (Mouse-ear cress)).